The primary structure comprises 936 residues: MutS protein homolog 4 (936 aa).

2 disordered regions span residues 1–83 (MLRP…AQGS) and 103–133 (GASSSSARDTNYPQTLKTPLSTGNPQRSGYK). The span at 7 to 20 (SSTSPSAPAVSPSS) shows a compositional bias: low complexity. Residues 35-55 (LQETPQSRPSVQVVSASTCPG) show a composition bias toward polar residues. 680–687 (GPNMSGKS) provides a ligand contact to ATP.

The protein belongs to the DNA mismatch repair MutS family. Heterooligomer of MSH4 and MSH5. In terms of tissue distribution, highly expressed in testis. Also expressed in the ovary.

It localises to the chromosome. In terms of biological role, involved in meiotic recombination. Required for reciprocal recombination and proper segregation of homologous chromosomes at meiosis. The chain is MutS protein homolog 4 (MSH4) from Homo sapiens (Human).